The sequence spans 243 residues: Outer membrane protein A (243 aa).

The next 5 beta stranded transmembrane spans lie at 1–8, 13–21, 48–57, 62–69, and 88–96; these read LTAKLGYP, LDIYTRLGG, PVFAGGVEWA, IATRLEYQ, and LLSLGVSYR. 4 tandem repeats follow at residues 107–108, 109–110, 111–112, and 113–114. Residues 107 to 114 are 4 X 2 AA tandem repeats of A-P; sequence APAPAPAP. One can recognise an OmpA-like domain in the interval 116 to 243; it reads VQTKHFTLKS…RRVEIEVKGI (128 aa). A disulfide bridge links Cys-217 with Cys-229.

It belongs to the outer membrane OOP (TC 1.B.6) superfamily. OmpA family. As to quaternary structure, monomer and homodimer.

The protein localises to the cell outer membrane. Functionally, with TolR probably plays a role in maintaining the position of the peptidoglycan cell wall in the periplasm. Acts as a porin with low permeability that allows slow penetration of small solutes; an internal gate slows down solute passage. In terms of biological role, required for conjugation with F-type plasmids; probably serves as the mating receptor on recipient cells. The protein is Outer membrane protein A of Escherichia fergusonii.